We begin with the raw amino-acid sequence, 431 residues long: Trigger factor (431 aa).

In terms of domain architecture, PPIase FKBP-type spans 161–246 (DDRVTIDFVG…LKKVENIVLP (86 aa)).

The protein belongs to the FKBP-type PPIase family. Tig subfamily.

The protein resides in the cytoplasm. It carries out the reaction [protein]-peptidylproline (omega=180) = [protein]-peptidylproline (omega=0). In terms of biological role, involved in protein export. Acts as a chaperone by maintaining the newly synthesized protein in an open conformation. Functions as a peptidyl-prolyl cis-trans isomerase. In Glaesserella parasuis serovar 5 (strain SH0165) (Haemophilus parasuis), this protein is Trigger factor.